The chain runs to 469 residues: Ribulose bisphosphate carboxylase large chain (469 aa).

Residues asparagine 115 and threonine 165 each coordinate substrate. Lysine 167 acts as the Proton acceptor in catalysis. Position 169 (lysine 169) interacts with substrate. Lysine 193, aspartate 195, and glutamate 196 together coordinate Mg(2+). Lysine 193 carries the N6-carboxylysine modification. Histidine 286 (proton acceptor) is an active-site residue. Arginine 287, histidine 319, and serine 371 together coordinate substrate.

The protein belongs to the RuBisCO large chain family. Type I subfamily. As to quaternary structure, heterohexadecamer of 8 large chains and 8 small chains. Requires Mg(2+) as cofactor.

It is found in the plastid. It localises to the organellar chromatophore. It carries out the reaction 2 (2R)-3-phosphoglycerate + 2 H(+) = D-ribulose 1,5-bisphosphate + CO2 + H2O. It catalyses the reaction D-ribulose 1,5-bisphosphate + O2 = 2-phosphoglycolate + (2R)-3-phosphoglycerate + 2 H(+). In terms of biological role, ruBisCO catalyzes two reactions: the carboxylation of D-ribulose 1,5-bisphosphate, the primary event in carbon dioxide fixation, as well as the oxidative fragmentation of the pentose substrate. Both reactions occur simultaneously and in competition at the same active site. The protein is Ribulose bisphosphate carboxylase large chain of Paulinella chromatophora.